The sequence spans 102 residues: NADH-quinone oxidoreductase subunit K (102 aa).

3 helical membrane passes run 6 to 26, 30 to 50, and 63 to 83; these read LIAM…GVLA, IMFQ…GFVA, and MFIL…ALFL.

Belongs to the complex I subunit 4L family. In terms of assembly, NDH-1 is composed of 14 different subunits. Subunits NuoA, H, J, K, L, M, N constitute the membrane sector of the complex.

It localises to the cell inner membrane. The catalysed reaction is a quinone + NADH + 5 H(+)(in) = a quinol + NAD(+) + 4 H(+)(out). Functionally, NDH-1 shuttles electrons from NADH, via FMN and iron-sulfur (Fe-S) centers, to quinones in the respiratory chain. The immediate electron acceptor for the enzyme in this species is believed to be ubiquinone. Couples the redox reaction to proton translocation (for every two electrons transferred, four hydrogen ions are translocated across the cytoplasmic membrane), and thus conserves the redox energy in a proton gradient. This chain is NADH-quinone oxidoreductase subunit K, found in Rhodopseudomonas palustris (strain BisB5).